We begin with the raw amino-acid sequence, 238 residues long: LexA repressor (238 aa).

Residues 26-46 constitute a DNA-binding region (H-T-H motif); that stretch reads FDEMKDALELRSKSGIHRLIS. Residues Ser-159 and Lys-197 each act as for autocatalytic cleavage activity in the active site.

This sequence belongs to the peptidase S24 family. In terms of assembly, homodimer.

The catalysed reaction is Hydrolysis of Ala-|-Gly bond in repressor LexA.. Represses a number of genes involved in the response to DNA damage (SOS response), including recA and lexA. In the presence of single-stranded DNA, RecA interacts with LexA causing an autocatalytic cleavage which disrupts the DNA-binding part of LexA, leading to derepression of the SOS regulon and eventually DNA repair. This Gluconobacter oxydans (strain 621H) (Gluconobacter suboxydans) protein is LexA repressor.